Consider the following 153-residue polypeptide: MTTEKKSLGIQEIMDLLPHRYPFLMVDRVDDYEISDERKTLRAIKNVSFNEPIFQGHFPAKPVFPGVLILEAMAQATGILAFTMVGKPSPNELYYFASIDNARFKRPVGPGDQLVLDVEFLKERRGIAKFTGVATVNGEVVCTAELMCAKREV.

His-57 is a catalytic residue.

This sequence belongs to the thioester dehydratase family. FabZ subfamily.

The protein resides in the cytoplasm. It carries out the reaction a (3R)-hydroxyacyl-[ACP] = a (2E)-enoyl-[ACP] + H2O. Its function is as follows. Involved in unsaturated fatty acids biosynthesis. Catalyzes the dehydration of short chain beta-hydroxyacyl-ACPs and long chain saturated and unsaturated beta-hydroxyacyl-ACPs. This chain is 3-hydroxyacyl-[acyl-carrier-protein] dehydratase FabZ, found in Aeromonas salmonicida (strain A449).